The following is a 166-amino-acid chain: MSYTTYFLAFQLCVTLCFSGSYCQAPFFKEITILKDYFNASTSDVPNGGPLFLEILKNWKEESDKKIIQSQIVSFYFKFFEIFKDNQAIQRSMDVIKQDMFQRFLNGSSGKLNDFEKLIKIPVDNLQIQRKAISELIKVMNDLSPRSNLRKRKRSQTMFQGQRASK.

Positions 1–23 (MSYTTYFLAFQLCVTLCFSGSYC) are cleaved as a signal peptide. Q24 bears the Pyrrolidone carboxylic acid mark. N39 and N106 each carry an N-linked (GlcNAc...) asparagine glycan.

Belongs to the type II (or gamma) interferon family. Homodimer. Interacts with IFNGR1 (via extracellular domain); this interaction promotes IFNGR1 dimerization. As to expression, released primarily from activated T lymphocytes.

It is found in the secreted. In terms of biological role, type II interferon produced by immune cells such as T-cells and NK cells that plays crucial roles in antimicrobial, antiviral, and antitumor responses by activating effector immune cells and enhancing antigen presentation. Primarily signals through the JAK-STAT pathway after interaction with its receptor IFNGR1 to affect gene regulation. Upon IFNG binding, IFNGR1 intracellular domain opens out to allow association of downstream signaling components JAK2, JAK1 and STAT1, leading to STAT1 activation, nuclear translocation and transcription of IFNG-regulated genes. Many of the induced genes are transcription factors such as IRF1 that are able to further drive regulation of a next wave of transcription. Plays a role in class I antigen presentation pathway by inducing a replacement of catalytic proteasome subunits with immunoproteasome subunits. In turn, increases the quantity, quality, and repertoire of peptides for class I MHC loading. Increases the efficiency of peptide generation also by inducing the expression of activator PA28 that associates with the proteasome and alters its proteolytic cleavage preference. Up-regulates as well MHC II complexes on the cell surface by promoting expression of several key molecules such as cathepsins B/CTSB, H/CTSH, and L/CTSL. Participates in the regulation of hematopoietic stem cells during development and under homeostatic conditions by affecting their development, quiescence, and differentiation. The polypeptide is Interferon gamma (IFNG) (Sus scrofa (Pig)).